A 165-amino-acid chain; its full sequence is Aspartate carbamoyltransferase regulatory chain (165 aa).

Zn(2+) contacts are provided by cysteine 121, cysteine 126, cysteine 149, and cysteine 152.

This sequence belongs to the PyrI family. As to quaternary structure, contains catalytic and regulatory chains. It depends on Zn(2+) as a cofactor.

Involved in allosteric regulation of aspartate carbamoyltransferase. This is Aspartate carbamoyltransferase regulatory chain from Methanoregula boonei (strain DSM 21154 / JCM 14090 / 6A8).